The primary structure comprises 246 residues: 3'(2'),5'-bisphosphate nucleotidase CysQ (246 aa).

Positions 64, 83, 85, 86, and 205 each coordinate Mg(2+). Glu-64 lines the substrate pocket. Substrate is bound by residues 85–88 (LDGT) and Asp-205.

Belongs to the inositol monophosphatase superfamily. CysQ family. It depends on Mg(2+) as a cofactor.

It is found in the cell inner membrane. The enzyme catalyses adenosine 3',5'-bisphosphate + H2O = AMP + phosphate. In terms of biological role, converts adenosine-3',5'-bisphosphate (PAP) to AMP. The protein is 3'(2'),5'-bisphosphate nucleotidase CysQ of Salmonella typhimurium (strain LT2 / SGSC1412 / ATCC 700720).